A 296-amino-acid polypeptide reads, in one-letter code: 4-diphosphocytidyl-2-C-methyl-D-erythritol kinase (296 aa).

Residue Lys-11 is part of the active site. An ATP-binding site is contributed by 96–106 (PVSSGLAGGSA). Asp-136 is a catalytic residue.

It belongs to the GHMP kinase family. IspE subfamily.

It carries out the reaction 4-CDP-2-C-methyl-D-erythritol + ATP = 4-CDP-2-C-methyl-D-erythritol 2-phosphate + ADP + H(+). Its pathway is isoprenoid biosynthesis; isopentenyl diphosphate biosynthesis via DXP pathway; isopentenyl diphosphate from 1-deoxy-D-xylulose 5-phosphate: step 3/6. In terms of biological role, catalyzes the phosphorylation of the position 2 hydroxy group of 4-diphosphocytidyl-2C-methyl-D-erythritol. The protein is 4-diphosphocytidyl-2-C-methyl-D-erythritol kinase of Anaplasma phagocytophilum (strain HZ).